The primary structure comprises 397 residues: MEQTWRWYGPNDPVSLDDIRQAGATGVVTALHHIPNGVVWPVSEIKQRQAELAAKNLVWSVVESVPIHEDIKTHSGNYQQYIENYQQTLRNIAECGIDTVCYNFMPILDWTRTDLEYELPDGSKALRFDQIAFAAFELHILKRPGASNDYTAEEQVQAEAYFNAMTEADIAKLTGNIIAGLPGAEEGYTLDQFRARLAEYDGIDKAQLRENMAYFLRAIIPVAEQVGLRMAVHPDDPPRPILGLPRIVSTIEDMQWLKETVDSIHNGFTMCTGSYGVRADNDLVKMIETFGDRIHFTHLRSTCREGNPKTFHEGGHLQGDVDMYSVVKAILTEEQRRQSLGDMRPIPMRPDHGHQMLDDLHKKTNPGYSAIGRLKGLAEVRGVELALKRTFFPDLKQ.

Belongs to the mannonate dehydratase family. Requires Fe(2+) as cofactor. Mn(2+) serves as cofactor.

It catalyses the reaction D-mannonate = 2-dehydro-3-deoxy-D-gluconate + H2O. It participates in carbohydrate metabolism; pentose and glucuronate interconversion. In terms of biological role, catalyzes the dehydration of D-mannonate. In Yersinia pseudotuberculosis serotype O:1b (strain IP 31758), this protein is Mannonate dehydratase.